Consider the following 353-residue polypeptide: Photosystem II D2 protein (353 aa).

Position 2 is an N-acetylthreonine (Thr-2). Thr-2 carries the post-translational modification Phosphothreonine. The helical transmembrane segment at 41-61 (CAYFALGGWFTGTTFVTSWYT) threads the bilayer. His-118 lines the chlorophyll a pocket. The helical transmembrane segment at 125–141 (GFMLRQFELARSVQLRP) threads the bilayer. 2 residues coordinate pheophytin a: Gln-130 and Asn-143. The chain crosses the membrane as a helical span at residues 153–166 (VFVSVFLIYPLGQS). Chlorophyll a is bound at residue His-198. The helical transmembrane segment at 208-228 (AALLCAIHGATVENTLFEDGD) threads the bilayer. 2 residues coordinate a plastoquinone: His-215 and Phe-262. Fe cation is bound at residue His-215. His-269 serves as a coordination point for Fe cation. The chain crosses the membrane as a helical span at residues 279-295 (GLWMSAIGVVGLALNLR).

The protein belongs to the reaction center PufL/M/PsbA/D family. PSII is composed of 1 copy each of membrane proteins PsbA, PsbB, PsbC, PsbD, PsbE, PsbF, PsbH, PsbI, PsbJ, PsbK, PsbL, PsbM, PsbT, PsbX, PsbY, PsbZ, Psb30/Ycf12, at least 3 peripheral proteins of the oxygen-evolving complex and a large number of cofactors. It forms dimeric complexes. The cofactor is The D1/D2 heterodimer binds P680, chlorophylls that are the primary electron donor of PSII, and subsequent electron acceptors. It shares a non-heme iron and each subunit binds pheophytin, quinone, additional chlorophylls, carotenoids and lipids. There is also a Cl(-1) ion associated with D1 and D2, which is required for oxygen evolution. The PSII complex binds additional chlorophylls, carotenoids and specific lipids..

The protein localises to the plastid. It is found in the chloroplast thylakoid membrane. The catalysed reaction is 2 a plastoquinone + 4 hnu + 2 H2O = 2 a plastoquinol + O2. Photosystem II (PSII) is a light-driven water:plastoquinone oxidoreductase that uses light energy to abstract electrons from H(2)O, generating O(2) and a proton gradient subsequently used for ATP formation. It consists of a core antenna complex that captures photons, and an electron transfer chain that converts photonic excitation into a charge separation. The D1/D2 (PsbA/PsbD) reaction center heterodimer binds P680, the primary electron donor of PSII as well as several subsequent electron acceptors. D2 is needed for assembly of a stable PSII complex. The sequence is that of Photosystem II D2 protein from Liriodendron tulipifera (Tuliptree).